A 207-amino-acid chain; its full sequence is Peptidyl-tRNA hydrolase (207 aa).

Y14 provides a ligand contact to tRNA. The active-site Proton acceptor is the H19. The tRNA site is built by Y64, N66, and N112.

It belongs to the PTH family. In terms of assembly, monomer.

It is found in the cytoplasm. The enzyme catalyses an N-acyl-L-alpha-aminoacyl-tRNA + H2O = an N-acyl-L-amino acid + a tRNA + H(+). Functionally, hydrolyzes ribosome-free peptidyl-tRNAs (with 1 or more amino acids incorporated), which drop off the ribosome during protein synthesis, or as a result of ribosome stalling. Catalyzes the release of premature peptidyl moieties from peptidyl-tRNA molecules trapped in stalled 50S ribosomal subunits, and thus maintains levels of free tRNAs and 50S ribosomes. In Rhodopseudomonas palustris (strain BisB5), this protein is Peptidyl-tRNA hydrolase.